The following is a 180-amino-acid chain: MSALTIFADNGASEPLWQSTDADAIREQLNAQGVRFERWQADRELGDNPTPETVLTAYQHAIDLLVAEKGYQSWDVISMRADNPQKEALRDKFLNEHTHGEDEVRFFVEGAGLFCLHIGDKVYQVLCEKNDLISVPAGTPHWFDMGSEPHFTAIRIFDNPEGWIANFTGSPIAEAYPRLA.

The Fe(2+) site is built by histidine 97, histidine 99, glutamate 103, and histidine 141. Residues histidine 97, histidine 99, glutamate 103, and histidine 141 each coordinate Ni(2+).

This sequence belongs to the acireductone dioxygenase (ARD) family. In terms of assembly, monomer. Fe(2+) is required as a cofactor. Ni(2+) serves as cofactor.

It catalyses the reaction 1,2-dihydroxy-5-(methylsulfanyl)pent-1-en-3-one + O2 = 3-(methylsulfanyl)propanoate + CO + formate + 2 H(+). It carries out the reaction 1,2-dihydroxy-5-(methylsulfanyl)pent-1-en-3-one + O2 = 4-methylsulfanyl-2-oxobutanoate + formate + 2 H(+). It participates in amino-acid biosynthesis; L-methionine biosynthesis via salvage pathway; L-methionine from S-methyl-5-thio-alpha-D-ribose 1-phosphate: step 5/6. Its function is as follows. Catalyzes 2 different reactions between oxygen and the acireductone 1,2-dihydroxy-3-keto-5-methylthiopentene (DHK-MTPene) depending upon the metal bound in the active site. Fe-containing acireductone dioxygenase (Fe-ARD) produces formate and 2-keto-4-methylthiobutyrate (KMTB), the alpha-ketoacid precursor of methionine in the methionine recycle pathway. Ni-containing acireductone dioxygenase (Ni-ARD) produces methylthiopropionate, carbon monoxide and formate, and does not lie on the methionine recycle pathway. The protein is Acireductone dioxygenase of Cronobacter sakazakii (strain ATCC BAA-894) (Enterobacter sakazakii).